We begin with the raw amino-acid sequence, 541 residues long: MNGVVIPQTPIAVDFWSLRRAGTARLFFLSHMHCDHTVGLSSTWARPLYCSPITAHLLHRRLQVSKQWIRALEIGESHVLLLDEIGQETMTVTLIDANHCPGSVMFLFEGYFGTILYTGDFRYTPSMLKEPALTLGKQIHTLYLDNTNCNPALVLPSRQEATQQIIQLIRQFPQHNIKIGLYSLGKESLLEQLALEFQTWVVLSPQRLELVQLLGLADVFTVEEEAGRIHAVDHMEICHSAMLQWNQTHPTIAIFPTSRKIRSPHPSIYSIPYSDHSSYSELRAFVAALRPCQVVPIVREQPCGEFFQDSLSPRLSMPLIPHSVQQYMSSSSRKTNVFWQLERRLKRPRTQGVVFESPEEKADQVKVDRDSKKHKKESLSPWAGCLSRLCPHPLQARKQLFPDFCRKEGDEPVLFCDSNKMATVLTAPLELSVQLQPVDEFPFPETREEIGLGSPLWSGGGSGSPTRGKQSNGMGCGSPPTHISRTTHLTPESGGLALKYLLTPVDFLQAGFSSRNFDQQVEKHQRVQCNNPAVMNTVDDV.

Lys334 participates in a covalent cross-link: Glycyl lysine isopeptide (Lys-Gly) (interchain with G-Cter in SUMO2). Disordered stretches follow at residues 350 to 375 and 450 to 489; these read TQGV…KKHK and IGLG…TTHL. Positions 358–371 are enriched in basic and acidic residues; it reads PEEKADQVKVDRDS. Positions 492–507 match the TBM motif; it reads ESGGLALKYLLTPVDF.

It belongs to the DNA repair metallo-beta-lactamase (DRMBL) family. Interacts with TERF2; the interaction is direct. Interacts with MUS81, MRE11 and FANCD2. Interacts with HSPA2, HSPA8 and HSPA14. Interacts with SPAG5. In terms of processing, ubiquitinated, leading to its degradation. Interaction with TERF2 protects it from ubiquitination.

It is found in the chromosome. The protein resides in the telomere. The protein localises to the nucleus. Its subcellular location is the cytoplasm. It localises to the cytoskeleton. It is found in the microtubule organizing center. The protein resides in the centrosome. The enzyme catalyses a beta-lactam + H2O = a substituted beta-amino acid. In terms of biological role, 5'-3' exonuclease that plays a central role in telomere maintenance and protection during S-phase. Participates in the protection of telomeres against non-homologous end-joining (NHEJ)-mediated repair, thereby ensuring that telomeres do not fuse. Plays a key role in telomeric loop (T loop) formation by being recruited by TERF2 at the leading end telomeres and by processing leading-end telomeres immediately after their replication via its exonuclease activity: generates 3' single-stranded overhang at the leading end telomeres avoiding blunt leading-end telomeres that are vulnerable to end-joining reactions and expose the telomere end in a manner that activates the DNA repair pathways. Together with TERF2, required to protect telomeres from replicative damage during replication by controlling the amount of DNA topoisomerase (TOP1, TOP2A and TOP2B) needed for telomere replication during fork passage and prevent aberrant telomere topology. Also involved in response to DNA damage: plays a role in response to DNA interstrand cross-links (ICLs) by facilitating double-strand break formation. In case of spindle stress, involved in prophase checkpoint. Possesses beta-lactamase activity, catalyzing the hydrolysis of penicillin G and nitrocefin. Exhibits no activity towards other beta-lactam antibiotic classes including cephalosporins (cefotaxime) and carbapenems (imipenem). In Rattus norvegicus (Rat), this protein is 5' exonuclease Apollo (Dclre1b).